A 217-amino-acid chain; its full sequence is UPF0502 protein KPN78578_10500 (217 aa).

Belongs to the UPF0502 family.

The polypeptide is UPF0502 protein KPN78578_10500 (Klebsiella pneumoniae subsp. pneumoniae (strain ATCC 700721 / MGH 78578)).